The following is a 331-amino-acid chain: Adenosine deaminase (331 aa).

Zn(2+)-binding residues include histidine 12 and histidine 14. Histidine 14, aspartate 16, and glycine 170 together coordinate substrate. Histidine 197 serves as a coordination point for Zn(2+). The active-site Proton donor is the glutamate 200. Aspartate 278 lines the Zn(2+) pocket. Aspartate 279 is a substrate binding site.

This sequence belongs to the metallo-dependent hydrolases superfamily. Adenosine and AMP deaminases family. Adenosine deaminase subfamily. Requires Zn(2+) as cofactor.

The catalysed reaction is adenosine + H2O + H(+) = inosine + NH4(+). It carries out the reaction 2'-deoxyadenosine + H2O + H(+) = 2'-deoxyinosine + NH4(+). Catalyzes the hydrolytic deamination of adenosine and 2-deoxyadenosine. This chain is Adenosine deaminase, found in Shewanella baltica (strain OS185).